A 150-amino-acid polypeptide reads, in one-letter code: Flagellar assembly factor FliW (150 aa).

The protein belongs to the FliW family. As to quaternary structure, interacts with translational regulator CsrA and flagellin(s).

The protein localises to the cytoplasm. Acts as an anti-CsrA protein, binds CsrA and prevents it from repressing translation of its target genes, one of which is flagellin. Binds to flagellin and participates in the assembly of the flagellum. The chain is Flagellar assembly factor FliW from Thermoanaerobacter pseudethanolicus (strain ATCC 33223 / 39E) (Clostridium thermohydrosulfuricum).